The chain runs to 93 residues: DNA-directed RNA polymerase subunit Rpo11 (93 aa).

The protein belongs to the archaeal Rpo11/eukaryotic RPB11/RPC19 RNA polymerase subunit family. In terms of assembly, part of the RNA polymerase complex.

It localises to the cytoplasm. The catalysed reaction is RNA(n) + a ribonucleoside 5'-triphosphate = RNA(n+1) + diphosphate. DNA-dependent RNA polymerase (RNAP) catalyzes the transcription of DNA into RNA using the four ribonucleoside triphosphates as substrates. This Sulfurisphaera tokodaii (strain DSM 16993 / JCM 10545 / NBRC 100140 / 7) (Sulfolobus tokodaii) protein is DNA-directed RNA polymerase subunit Rpo11.